The sequence spans 580 residues: Arginine--tRNA ligase (580 aa).

Residues A131–H141 carry the 'HIGH' region motif.

Belongs to the class-I aminoacyl-tRNA synthetase family. As to quaternary structure, monomer.

The protein localises to the cytoplasm. It carries out the reaction tRNA(Arg) + L-arginine + ATP = L-arginyl-tRNA(Arg) + AMP + diphosphate. The chain is Arginine--tRNA ligase from Cereibacter sphaeroides (strain ATCC 17023 / DSM 158 / JCM 6121 / CCUG 31486 / LMG 2827 / NBRC 12203 / NCIMB 8253 / ATH 2.4.1.) (Rhodobacter sphaeroides).